A 602-amino-acid polypeptide reads, in one-letter code: T-cell surface protein tactile (602 aa).

The N-terminal stretch at 1–21 is a signal peptide; sequence MGRKWTYCVVYTIIQIQFFRG. The Extracellular portion of the chain corresponds to 22-536; it reads VWEELFNVGD…IIVNQPSDGM (515 aa). 2 Ig-like V-type domains span residues 24 to 134 and 138 to 244; these read EELF…VYNL and PYTQ…STTV. N-linked (GlcNAc...) asparagine glycans are attached at residues Asn42, Asn100, Asn107, Asn145, Asn153, Asn163, Asn195, Asn196, Asn258, Asn281, Asn306, Asn330, Asn348, Asn415, Asn436, and Asn514. A disulfide bridge connects residues Cys45 and Cys118. Cys160 and Cys228 are disulfide-bonded. One can recognise an Ig-like C2-type domain in the interval 250-355; sequence PEILMTVENS…MWNTSSQPIT (106 aa). An intrachain disulfide couples Cys271 to Cys335. The disordered stretch occupies residues 402-478; it reads ENGLTPDATP…PQEPDSPVSW (77 aa). Over residues 409-433 the composition is skewed to polar residues; it reads ATPQTSNSSMTTKDGNYLEASSGTD. Positions 434–448 are enriched in low complexity; sequence AKNSSRAAASSKSGS. A helical transmembrane segment spans residues 537 to 557; it reads SWPVLVAALLFFCTLLFGLGV. The Cytoplasmic portion of the chain corresponds to 558 to 602; the sequence is RKWYRYQNEIMERPPPFKPPPPPIKYTYIQEPIGCDLCCHEMEVL.

Homodimer; disulfide-linked. Interacts with PVR.

It is found in the membrane. May be involved in adhesive interactions of activated T and NK cells during the late phase of the immune response. Promotes NK cell-target adhesion by interacting with PVR present on target cells. May function at a time after T and NK cells have penetrated the endothelium using integrins and selectins, when they are actively engaging diseased cells and moving within areas of inflammation. This Mus musculus (Mouse) protein is T-cell surface protein tactile (Cd96).